The following is a 34-amino-acid chain: SXPLPLIVNTWPFKXATTIGMVVIHLKGYTAAGT.

Catalysis depends on Thr18, which acts as the Nucleophile.

Belongs to the Ntn-hydrolase family. Heterotetramer of two alpha and two beta chains arranged as a dimer of alpha/beta heterodimers. Cleaved into an alpha and beta chain by autocatalysis; this activates the enzyme. The N-terminal residue of the beta subunit is responsible for the nucleophile hydrolase activity. In terms of processing, N-glycosylated.

It is found in the lysosome. The catalysed reaction is N(4)-(beta-N-acetyl-D-glucosaminyl)-L-asparagine + H2O = N-acetyl-beta-D-glucosaminylamine + L-aspartate + H(+). Cleaves the GlcNAc-Asn bond which joins oligosaccharides to the peptide of asparagine-linked glycoproteins. This Sus scrofa (Pig) protein is N(4)-(Beta-N-acetylglucosaminyl)-L-asparaginase (AGA).